Here is a 271-residue protein sequence, read N- to C-terminus: Putative phosphoenolpyruvate synthase regulatory protein (271 aa).

Residue 151–158 (GVSRSGKT) coordinates ADP.

The protein belongs to the pyruvate, phosphate/water dikinase regulatory protein family. PSRP subfamily.

It catalyses the reaction [pyruvate, water dikinase] + ADP = [pyruvate, water dikinase]-phosphate + AMP + H(+). It carries out the reaction [pyruvate, water dikinase]-phosphate + phosphate + H(+) = [pyruvate, water dikinase] + diphosphate. Functionally, bifunctional serine/threonine kinase and phosphorylase involved in the regulation of the phosphoenolpyruvate synthase (PEPS) by catalyzing its phosphorylation/dephosphorylation. This Burkholderia ambifaria (strain MC40-6) protein is Putative phosphoenolpyruvate synthase regulatory protein.